Consider the following 396-residue polypeptide: Mitogen-activated protein kinase mpkC (396 aa).

In terms of domain architecture, Protein kinase spans 20-299 (YSDLQPVGLG…AAKALEHPYL (280 aa)). ATP contacts are provided by residues 26 to 34 (VGLGAFGLV) and K49. D141 acts as the Proton acceptor in catalysis. At T171 the chain carries Phosphothreonine. The short motif at 171–173 (TGY) is the TXY element. Y173 carries the phosphotyrosine modification.

The protein belongs to the protein kinase superfamily. Ser/Thr protein kinase family. MAP kinase subfamily. HOG1 sub-subfamily. Requires Mg(2+) as cofactor. Post-translationally, dually phosphorylated on Thr-171 and Tyr-173, which activates the enzyme.

It catalyses the reaction L-seryl-[protein] + ATP = O-phospho-L-seryl-[protein] + ADP + H(+). It carries out the reaction L-threonyl-[protein] + ATP = O-phospho-L-threonyl-[protein] + ADP + H(+). Its activity is regulated as follows. Activated by tyrosine and threonine phosphorylation. Mitogen-activated protein kinase required for growth on media where sorbitol or mannitol is the sole carbon source. The chain is Mitogen-activated protein kinase mpkC (mpkC) from Aspergillus niger (strain ATCC MYA-4892 / CBS 513.88 / FGSC A1513).